The chain runs to 167 residues: Transcription factor HES-5 (167 aa).

Positions 16 to 72 (KNRLRKPVVEKMRRDRINSSIEQLKLLLEQEFARHQPNSKLEKADILEMAVSYLKHS) constitute a bHLH domain. An Orange domain is found at 88 to 119 (YSEGYSWCLQEAVQFLTLHAASDTQMKLLYHF). Pro residues predominate over residues 124–138 (APAAPAKEPPAPGAA). The interval 124-167 (APAAPAKEPPAPGAAPQPARSSAKAAAAAVSTSRQPACGLWRPW) is disordered. Low complexity predominate over residues 139 to 160 (PQPARSSAKAAAAAVSTSRQPA). The WRPW motif signature appears at 164–167 (WRPW).

Transcription repression requires formation of a complex with a corepressor protein of the Groucho/TLE family.

It localises to the nucleus. Its function is as follows. Transcriptional repressor of genes that require a bHLH protein for their transcription. Plays an important role as neurogenesis negative regulator. The chain is Transcription factor HES-5 (Hes5) from Mus musculus (Mouse).